We begin with the raw amino-acid sequence, 539 residues long: E3 ubiquitin-protein ligase arc-1 (539 aa).

The segment at 6–53 (CNVCNEEYSARDPLKCPRVLTGCGHTICHNCAISIAGRNSSIFCPFDR) adopts an RING-type zinc-finger fold. The segment at 103–149 (LLNLECDEDSEHVAVIYCTVCDSNLCERCSESTHSTNVLSKHRRIPL) adopts a B box-type zinc-finger fold. Residues 369-539 (ESRVVLLGLD…LSRLNGTCPV (171 aa)) are ARF-like. GTP contacts are provided by residues 376 to 383 (GLDGAGKT), 422 to 426 (DVGGL), and 481 to 484 (NRKD).

This sequence in the C-terminal section; belongs to the small GTPase superfamily. Arf family.

It catalyses the reaction S-ubiquitinyl-[E2 ubiquitin-conjugating enzyme]-L-cysteine + [acceptor protein]-L-lysine = [E2 ubiquitin-conjugating enzyme]-L-cysteine + N(6)-ubiquitinyl-[acceptor protein]-L-lysine.. The protein operates within protein modification; protein ubiquitination. Functionally, acts as an E3 ubiquitin-protein ligase. This chain is E3 ubiquitin-protein ligase arc-1 (arc-1), found in Caenorhabditis elegans.